The primary structure comprises 319 residues: Ribonuclease Z (319 aa).

Zn(2+) contacts are provided by H62, H64, D66, H67, H145, D216, and H274. Catalysis depends on D66, which acts as the Proton acceptor.

The protein belongs to the RNase Z family. In terms of assembly, homodimer. It depends on Zn(2+) as a cofactor.

It carries out the reaction Endonucleolytic cleavage of RNA, removing extra 3' nucleotides from tRNA precursor, generating 3' termini of tRNAs. A 3'-hydroxy group is left at the tRNA terminus and a 5'-phosphoryl group is left at the trailer molecule.. Its function is as follows. Zinc phosphodiesterase, which displays some tRNA 3'-processing endonuclease activity. Probably involved in tRNA maturation, by removing a 3'-trailer from precursor tRNA. In Parasynechococcus marenigrum (strain WH8102), this protein is Ribonuclease Z.